Here is a 185-residue protein sequence, read N- to C-terminus: Ribosome-recycling factor (185 aa).

The protein belongs to the RRF family.

The protein resides in the cytoplasm. Responsible for the release of ribosomes from messenger RNA at the termination of protein biosynthesis. May increase the efficiency of translation by recycling ribosomes from one round of translation to another. The sequence is that of Ribosome-recycling factor from Alteromonas mediterranea (strain DSM 17117 / CIP 110805 / LMG 28347 / Deep ecotype).